A 155-amino-acid chain; its full sequence is MPKGTGKVIAQNKKAFHDYFIEETYEVGLVLQGTEIKSIRAGRVNLKDAFARIHNGEVWVHNMHINTYEQGNRFNHDPLRTRKLLLHKKEIDKLAGYAKETGYALVPVRIYLKNGFAKMALGLAKGKKQYDKRHDLKEKEAKREIARVFRDRQKM.

This sequence belongs to the SmpB family.

It is found in the cytoplasm. Required for rescue of stalled ribosomes mediated by trans-translation. Binds to transfer-messenger RNA (tmRNA), required for stable association of tmRNA with ribosomes. tmRNA and SmpB together mimic tRNA shape, replacing the anticodon stem-loop with SmpB. tmRNA is encoded by the ssrA gene; the 2 termini fold to resemble tRNA(Ala) and it encodes a 'tag peptide', a short internal open reading frame. During trans-translation Ala-aminoacylated tmRNA acts like a tRNA, entering the A-site of stalled ribosomes, displacing the stalled mRNA. The ribosome then switches to translate the ORF on the tmRNA; the nascent peptide is terminated with the 'tag peptide' encoded by the tmRNA and targeted for degradation. The ribosome is freed to recommence translation, which seems to be the essential function of trans-translation. The chain is SsrA-binding protein from Bacillus mycoides (strain KBAB4) (Bacillus weihenstephanensis).